The following is an 806-amino-acid chain: Leucine--tRNA ligase (806 aa).

A 'HIGH' region motif is present at residues 38-48; that stretch reads PYPSGEIHMGH. The short motif at 572 to 576 is the 'KMSKS' region element; the sequence is KMSKS. K575 serves as a coordination point for ATP.

It belongs to the class-I aminoacyl-tRNA synthetase family.

It is found in the cytoplasm. The enzyme catalyses tRNA(Leu) + L-leucine + ATP = L-leucyl-tRNA(Leu) + AMP + diphosphate. This is Leucine--tRNA ligase from Helicobacter acinonychis (strain Sheeba).